Consider the following 130-residue polypeptide: Small ribosomal subunit protein uS11 (130 aa).

Belongs to the universal ribosomal protein uS11 family. In terms of assembly, part of the 30S ribosomal subunit.

Its function is as follows. Located on the platform of the 30S subunit. This chain is Small ribosomal subunit protein uS11, found in Ignicoccus hospitalis (strain KIN4/I / DSM 18386 / JCM 14125).